The following is a 194-amino-acid chain: MRKWILTWILPSLLYRSCFHIICLVGTISLACNDMTPEQMATNVNCSSPERHTRSYDYMEGGDIRVRRLFCRTQWYLRIDKRGKVKGTQEMKNNYNIMEIRTVAVGIVAIKGVESEYYLAMNKEGKLYAKKECNEDCNFKELILENHYNTYASAKWTHSGGEMFVALNQKGVPVRGKKTKKEQKTAHFLPMAIT.

The first 31 residues, 1 to 31 (MRKWILTWILPSLLYRSCFHIICLVGTISLA), serve as a signal peptide directing secretion. An N-linked (GlcNAc...) asparagine glycan is attached at Asn45.

This sequence belongs to the heparin-binding growth factors family. As to quaternary structure, interacts with FGFBP1. Interacts with FGFR2. Affinity between fibroblast growth factors (FGFs) and their receptors is increased by heparan sulfate glycosaminoglycans that function as coreceptors.

It is found in the secreted. Its function is as follows. Plays an important role in the regulation of embryonic development, cell proliferation and cell differentiation. Required for normal branching morphogenesis. Growth factor active on keratinocytes. Possible major paracrine effector of normal epithelial cell proliferation. The polypeptide is Fibroblast growth factor 7 (FGF7) (Cervus elaphus (Red deer)).